Reading from the N-terminus, the 644-residue chain is DNA gyrase subunit B (644 aa).

Residues 429–543 (CEIFLVEGDS…AGYVYIAQPP (115 aa)) form the Toprim domain. Mg(2+) contacts are provided by E435, D508, and D510.

The protein belongs to the type II topoisomerase GyrB family. In terms of assembly, heterotetramer, composed of two GyrA and two GyrB chains. In the heterotetramer, GyrA contains the active site tyrosine that forms a transient covalent intermediate with DNA, while GyrB binds cofactors and catalyzes ATP hydrolysis. It depends on Mg(2+) as a cofactor. The cofactor is Mn(2+). Requires Ca(2+) as cofactor.

The protein resides in the cytoplasm. It carries out the reaction ATP-dependent breakage, passage and rejoining of double-stranded DNA.. A type II topoisomerase that negatively supercoils closed circular double-stranded (ds) DNA in an ATP-dependent manner to modulate DNA topology and maintain chromosomes in an underwound state. Negative supercoiling favors strand separation, and DNA replication, transcription, recombination and repair, all of which involve strand separation. Also able to catalyze the interconversion of other topological isomers of dsDNA rings, including catenanes and knotted rings. Type II topoisomerases break and join 2 DNA strands simultaneously in an ATP-dependent manner. In Staphylococcus aureus (strain USA300), this protein is DNA gyrase subunit B.